The primary structure comprises 259 residues: L-cystine import ATP-binding protein TcyN (259 aa).

In terms of domain architecture, ABC transporter spans 2–239 (IEIKNIHKQF…TKKDRTRQFL (238 aa)). An ATP-binding site is contributed by 34 to 41 (GPSGSGKT).

The protein belongs to the ABC transporter superfamily. L-cystine importer (TC 3.A.1.3.13) family. In terms of assembly, the complex is composed of two ATP-binding proteins (TcyN), two transmembrane proteins (TcyL and TcyM) and two solute-binding proteins (TcyJ and TcyK).

The protein localises to the cell membrane. In terms of biological role, part of the ABC transporter complex TcyJKLMN involved in L-cystine import. Responsible for energy coupling to the transport system. Is also involved in cystathionine, djenkolate, and S-methylcysteine transport. This is L-cystine import ATP-binding protein TcyN (tcyN) from Bacillus subtilis (strain 168).